Consider the following 168-residue polypeptide: Phosphopantetheine adenylyltransferase (168 aa).

Thr14 provides a ligand contact to substrate. ATP-binding positions include 14–15 (TF) and His22. Positions 46, 78, and 92 each coordinate substrate. ATP-binding positions include 93-95 (GLR), Glu103, and 128-134 (YSFISSS).

It belongs to the bacterial CoaD family. Homohexamer. The cofactor is Mg(2+).

The protein resides in the cytoplasm. The catalysed reaction is (R)-4'-phosphopantetheine + ATP + H(+) = 3'-dephospho-CoA + diphosphate. Its pathway is cofactor biosynthesis; coenzyme A biosynthesis; CoA from (R)-pantothenate: step 4/5. In terms of biological role, reversibly transfers an adenylyl group from ATP to 4'-phosphopantetheine, yielding dephospho-CoA (dPCoA) and pyrophosphate. In Xanthomonas campestris pv. campestris (strain B100), this protein is Phosphopantetheine adenylyltransferase.